The sequence spans 469 residues: Glutamate--tRNA ligase 2 (469 aa).

Positions 10 to 20 (PSPTGYLHIGG) match the 'HIGH' region motif. Zn(2+) is bound by residues C99, C101, C126, and D128. Residues 237-241 (RLSKR) carry the 'KMSKS' region motif. An ATP-binding site is contributed by K240.

Belongs to the class-I aminoacyl-tRNA synthetase family. Glutamate--tRNA ligase type 1 subfamily. As to quaternary structure, monomer. The cofactor is Zn(2+).

It localises to the cytoplasm. The enzyme catalyses tRNA(Glu) + L-glutamate + ATP = L-glutamyl-tRNA(Glu) + AMP + diphosphate. Functionally, catalyzes the attachment of glutamate to tRNA(Glu) in a two-step reaction: glutamate is first activated by ATP to form Glu-AMP and then transferred to the acceptor end of tRNA(Glu). This is Glutamate--tRNA ligase 2 from Coxiella burnetii (strain CbuG_Q212) (Coxiella burnetii (strain Q212)).